A 199-amino-acid chain; its full sequence is Superoxide dismutase [Fe] (199 aa).

Residues histidine 27, histidine 79, aspartate 161, and histidine 165 each coordinate Fe cation.

Belongs to the iron/manganese superoxide dismutase family. As to quaternary structure, homodimer. Requires Fe cation as cofactor.

It carries out the reaction 2 superoxide + 2 H(+) = H2O2 + O2. In terms of biological role, destroys superoxide anion radicals which are normally produced within the cells and which are toxic to biological systems. The protein is Superoxide dismutase [Fe] (sodB) of Synechocystis sp. (strain ATCC 27184 / PCC 6803 / Kazusa).